The sequence spans 407 residues: Phosphopentomutase (407 aa).

Mn(2+) contacts are provided by aspartate 10, aspartate 306, histidine 311, aspartate 347, histidine 348, and histidine 359.

Belongs to the phosphopentomutase family. The cofactor is Mn(2+).

Its subcellular location is the cytoplasm. It catalyses the reaction 2-deoxy-alpha-D-ribose 1-phosphate = 2-deoxy-D-ribose 5-phosphate. The enzyme catalyses alpha-D-ribose 1-phosphate = D-ribose 5-phosphate. Its pathway is carbohydrate degradation; 2-deoxy-D-ribose 1-phosphate degradation; D-glyceraldehyde 3-phosphate and acetaldehyde from 2-deoxy-alpha-D-ribose 1-phosphate: step 1/2. Its function is as follows. Isomerase that catalyzes the conversion of deoxy-ribose 1-phosphate (dRib-1-P) and ribose 1-phosphate (Rib-1-P) to deoxy-ribose 5-phosphate (dRib-5-P) and ribose 5-phosphate (Rib-5-P), respectively. The sequence is that of Phosphopentomutase from Sodalis glossinidius (strain morsitans).